A 423-amino-acid chain; its full sequence is MAAQRVFPLSCVVQQYAWGKMGSNSEVARLLASSDPLAQISEDRPYAELWMGTHPRGDAKILDNRISQKTLGQWIADNQDSLGSKVKDTFNGKLPFLFKVLSVETALSIQAHPNKELAEKLHLQAPQHYPDANHKPEMAIALTPFQGLCGFRPVEEIVTFLTKVPEFQFLIGDNAAAQLKQSLSQDSEAVTSALRSCFSHLMKSEKKVVVEQLNLLVKRISQQVAAGNNMEDICGELLLQLHQQYPGDIGCFAIYFLNLLTLKPGEAMFLEANVPHAYLKGDCVECMACSDNTVRAGLTPKFIDVPTLCEMLSYTPSPSQDRLFPPARSPEDPYLSIYDPPVPDFTVMKVEVPGSVTEYKVLALDSASILLVVQGTVTASSPTAQAAIPLKRGGVLFIGANESVSLKLTVPKDLLMFRACCLL.

Ala-2 bears the N-acetylalanine mark. Phosphoserine is present on residues Ser-102 and Ser-108. Residues Gln-110, His-112, Glu-137, and His-276 each contribute to the Zn(2+) site. The active site involves Arg-295.

The protein belongs to the mannose-6-phosphate isomerase type 1 family. Zn(2+) serves as cofactor.

It is found in the cytoplasm. It carries out the reaction D-mannose 6-phosphate = D-fructose 6-phosphate. It functions in the pathway nucleotide-sugar biosynthesis; GDP-alpha-D-mannose biosynthesis; alpha-D-mannose 1-phosphate from D-fructose 6-phosphate: step 1/2. Functionally, isomerase that catalyzes the interconversion of fructose-6-P and mannose-6-P and has a critical role in the supply of D-mannose derivatives required for many eukaryotic glycosylation reactions. This is Mannose-6-phosphate isomerase (MPI) from Bos taurus (Bovine).